The sequence spans 161 residues: General odorant-binding protein 2 (161 aa).

The N-terminal stretch at 1–20 is a signal peptide; the sequence is MVNRLILMVVVVFITDSVMG. 3 cysteine pairs are disulfide-bonded: cysteine 39–cysteine 74, cysteine 70–cysteine 128, and cysteine 117–cysteine 137.

Belongs to the PBP/GOBP family. Homodimer. As to expression, olfactory tissue; expressed by the glia-like support cells that ensheathe the sensory neurons and line the base of the sensillum lumen.

Functionally, present in the aqueous fluid surrounding olfactory sensory dendrites and are thought to aid in the capture and transport of hydrophobic odorants into and through this fluid. The protein is General odorant-binding protein 2 (GOBP2) of Manduca sexta (Tobacco hawkmoth).